Reading from the N-terminus, the 244-residue chain is Ribonuclease 3 (244 aa).

The region spanning 21–148 (DHAPLLEAWG…MLGAIYLHHG (128 aa)) is the RNase III domain. E61 contributes to the Mg(2+) binding site. D65 is a catalytic residue. Mg(2+)-binding residues include D134 and E137. Residue E137 is part of the active site. The 68-residue stretch at 175 to 242 (DWKTVLLEKL…AKQAVQKLNE (68 aa)) folds into the DRBM domain.

The protein belongs to the ribonuclease III family. Homodimer. It depends on Mg(2+) as a cofactor.

The protein localises to the cytoplasm. The catalysed reaction is Endonucleolytic cleavage to 5'-phosphomonoester.. Its function is as follows. Digests double-stranded RNA. Involved in the processing of primary rRNA transcript to yield the immediate precursors to the large and small rRNAs (23S and 16S). Processes some mRNAs, and tRNAs when they are encoded in the rRNA operon. Processes pre-crRNA and tracrRNA of type II CRISPR loci if present in the organism. The sequence is that of Ribonuclease 3 from Corynebacterium jeikeium (strain K411).